The sequence spans 498 residues: MGRKKIQIQRITDERNRQVTFTKRKFGLMKKAYELSVLCDCEIALIIFNHSNKLFQYASTDMDKVLLKYTEYNEPHESRTNADIIETLRKKGFNGCDSPEPDGDDSIDQSPLMEDKYRKSSEDLDILFKRYGSAVPAPNFAMPVTVPVTNQNALHFSNPGGSLITQSLMTSSLTDPRLLSPPQPSLQRNTVSPGLPQRPASAGAMLGGELNNSNGTCPSPVGNGYISARASPGLLPVSNGNSLGKVIQAKSPPSPNQNSQLGANSRKPDLRVITSQGGKGLMHHLTEEQLEMSVQRLGGVSQATHSLTTPVVSVATPSLLSHHGLPFSAMSTAYNTDYQLTSADLASLSTFSSPGSLSLGNVTAWQHQQQQQQQHNQPQQLIPVSLSNLVSSSHLPHTATLTVNTNPINISIKREPASPNRERSTGTPLSCFSHQSRHEATGRSPVDSLSSNASSFEGNDREDPRGDYTSSLGLLRPSGDTESESQSVKRMRLDAWVT.

An interaction with hdac9 region spans residues 1 to 100 (MGRKKIQIQR…KGFNGCDSPE (100 aa)). Residues 3–57 (RKKIQIQRITDERNRQVTFTKRKFGLMKKAYELSVLCDCEIALIIFNHSNKLFQY) enclose the MADS-box domain. The segment at residues 58–86 (ASTDMDKVLLKYTEYNEPHESRTNADIIE) is a DNA-binding region (mef2-type). Disordered stretches follow at residues 173–215 (LTDP…NSNG), 243–267 (LGKV…NSRK), and 411–498 (SIKR…AWVT). Basic and acidic residues predominate over residues 412 to 424 (IKREPASPNRERS). 2 stretches are compositionally biased toward polar residues: residues 425-434 (TGTPLSCFSH) and 447-457 (DSLSSNASSFE).

The protein belongs to the MEF2 family. Binds DNA as a multimer, probably as a dimer. Interacts with hdac9. In terms of tissue distribution, restricted to the somitic mesoderm of early embryos and to the body muscle (myotomes) of the tadpole. Expressed in all tissues examined in the adult.

It is found in the nucleus. In terms of biological role, may regulate muscle-specific transcription in the embryo and may regulate transcription of a variety of cell types in the adult. It binds to the sequence 5'-CTA[TA]4TAR-3'. This Xenopus laevis (African clawed frog) protein is Myocyte-specific enhancer factor 2D homolog (mef2d).